Consider the following 401-residue polypeptide: tRNA(Met) cytidine acetate ligase (401 aa).

ATP contacts are provided by residues 7-20, Gly101, Asn160, and 185-186; these read IVEYNPFHNGHLYH and RI.

Belongs to the TmcAL family.

Its subcellular location is the cytoplasm. The catalysed reaction is cytidine(34) in elongator tRNA(Met) + acetate + ATP = N(4)-acetylcytidine(34) in elongator tRNA(Met) + AMP + diphosphate. Its function is as follows. Catalyzes the formation of N(4)-acetylcytidine (ac(4)C) at the wobble position of elongator tRNA(Met), using acetate and ATP as substrates. First activates an acetate ion to form acetyladenylate (Ac-AMP) and then transfers the acetyl group to tRNA to form ac(4)C34. This Geobacillus sp. (strain WCH70) protein is tRNA(Met) cytidine acetate ligase.